Here is a 723-residue protein sequence, read N- to C-terminus: Host cell factor 2 (723 aa).

4 Kelch repeats span residues 34-79 (LMII…GFVC), 83-130 (RILV…RLGH), 207-255 (KMYV…VIGN), and 257-305 (MYIF…DSQE). Fibronectin type-III domains are found at residues 357-436 (PPAP…ANCT), 516-606 (TPSN…TCIP), and 608-720 (FPGA…SKKA). Positions 398–472 (AASPDASAAP…VALHSPLAPN (75 aa)) are disordered. Over residues 419-433 (QGSNSILHNSVSDPA) the composition is skewed to polar residues.

As to quaternary structure, binds KMT2A/MLL1. Component of the MLL1/MLL complex, at least composed of KMT2A/MLL1, ASH2L, RBBP5, DPY30, WDR5, MEN1, HCFC1 and HCFC2. Interacts with TASOR.

The protein localises to the cytoplasm. It localises to the nucleus. This Rattus norvegicus (Rat) protein is Host cell factor 2 (Hcfc2).